The primary structure comprises 389 residues: S-adenosylmethionine synthase (389 aa).

His-16 is an ATP binding site. Asp-18 lines the Mg(2+) pocket. Glu-44 provides a ligand contact to K(+). Positions 57 and 100 each coordinate L-methionine. Residues 100–110 (QSPDIAQGVDE) form a flexible loop region. ATP-binding positions include 167–169 (DAK), 233–234 (RF), Asp-242, 248–249 (RK), Ala-265, and Lys-269. Asp-242 provides a ligand contact to L-methionine. Residue Lys-273 participates in L-methionine binding.

It belongs to the AdoMet synthase family. Homotetramer; dimer of dimers. It depends on Mg(2+) as a cofactor. K(+) is required as a cofactor.

It is found in the cytoplasm. The enzyme catalyses L-methionine + ATP + H2O = S-adenosyl-L-methionine + phosphate + diphosphate. It participates in amino-acid biosynthesis; S-adenosyl-L-methionine biosynthesis; S-adenosyl-L-methionine from L-methionine: step 1/1. Catalyzes the formation of S-adenosylmethionine (AdoMet) from methionine and ATP. The overall synthetic reaction is composed of two sequential steps, AdoMet formation and the subsequent tripolyphosphate hydrolysis which occurs prior to release of AdoMet from the enzyme. The sequence is that of S-adenosylmethionine synthase from Acidithiobacillus ferrooxidans (strain ATCC 23270 / DSM 14882 / CIP 104768 / NCIMB 8455) (Ferrobacillus ferrooxidans (strain ATCC 23270)).